The sequence spans 487 residues: Cysteine--tRNA ligase (487 aa).

C29 is a Zn(2+) binding site. The 'HIGH' region signature appears at 31–41; the sequence is VTVYDYNHVGH. C209, H234, and E238 together coordinate Zn(2+). The 'KMSKS' region signature appears at 266–270; that stretch reads KMSKS. K269 serves as a coordination point for ATP.

It belongs to the class-I aminoacyl-tRNA synthetase family. As to quaternary structure, monomer. The cofactor is Zn(2+).

The protein localises to the cytoplasm. It carries out the reaction tRNA(Cys) + L-cysteine + ATP = L-cysteinyl-tRNA(Cys) + AMP + diphosphate. The chain is Cysteine--tRNA ligase from Sulfurihydrogenibium sp. (strain YO3AOP1).